Reading from the N-terminus, the 354-residue chain is Peptide-N(4)-(N-acetyl-beta-D-glucosaminyl)asparagine amidase F (354 aa).

The N-terminal stretch at 1 to 40 is a signal peptide; that stretch reads MRKLLIFSISAYLMAGIVSCKGVDSATPVTEDRLALNAVN. Cys91 and Cys96 form a disulfide bridge. Catalysis depends on residues Asp100, Glu158, and Glu246. Disulfide bonds link Cys244–Cys248 and Cys271–Cys292.

Monomer.

The enzyme catalyses Hydrolysis of an N(4)-(acetyl-beta-D-glucosaminyl)asparagine residue in which the glucosamine residue may be further glycosylated, to yield a (substituted) N-acetyl-beta-D-glucosaminylamine and a peptide containing an aspartate residue.. Its function is as follows. Cleaves an entire glycan from a glycoprotein. Requires that the glycosylated asparagine moiety (reaction 1) be substituted on its amino (R1) and carboxyl (R2) terminus with a polypeptide chain. This Elizabethkingia miricola (Chryseobacterium miricola) protein is Peptide-N(4)-(N-acetyl-beta-D-glucosaminyl)asparagine amidase F (ngl).